Consider the following 444-residue polypeptide: Methylenetetrahydrofolate--tRNA-(uracil-5-)-methyltransferase TrmFO (444 aa).

9 to 14 (GAGMAG) contacts FAD.

It belongs to the MnmG family. TrmFO subfamily. It depends on FAD as a cofactor.

The protein localises to the cytoplasm. The enzyme catalyses uridine(54) in tRNA + (6R)-5,10-methylene-5,6,7,8-tetrahydrofolate + NADH + H(+) = 5-methyluridine(54) in tRNA + (6S)-5,6,7,8-tetrahydrofolate + NAD(+). It catalyses the reaction uridine(54) in tRNA + (6R)-5,10-methylene-5,6,7,8-tetrahydrofolate + NADPH + H(+) = 5-methyluridine(54) in tRNA + (6S)-5,6,7,8-tetrahydrofolate + NADP(+). Functionally, catalyzes the folate-dependent formation of 5-methyl-uridine at position 54 (M-5-U54) in all tRNAs. This chain is Methylenetetrahydrofolate--tRNA-(uracil-5-)-methyltransferase TrmFO, found in Cereibacter sphaeroides (strain KD131 / KCTC 12085) (Rhodobacter sphaeroides).